We begin with the raw amino-acid sequence, 426 residues long: Chaperone SurA (426 aa).

Positions 1-13 (MLGALFLSTAASA) are cleaved as a signal peptide. 2 consecutive PpiC domains span residues 164 to 265 (SEEL…KLLD) and 274 to 373 (RDEV…EVLG).

The protein localises to the periplasm. It catalyses the reaction [protein]-peptidylproline (omega=180) = [protein]-peptidylproline (omega=0). Chaperone involved in the correct folding and assembly of outer membrane proteins. Recognizes specific patterns of aromatic residues and the orientation of their side chains, which are found more frequently in integral outer membrane proteins. May act in both early periplasmic and late outer membrane-associated steps of protein maturation. The protein is Chaperone SurA of Pseudomonas fluorescens (strain ATCC BAA-477 / NRRL B-23932 / Pf-5).